Consider the following 884-residue polypeptide: Lon protease homolog 2, peroxisomal (884 aa).

Positions 12 to 255 (LAILPFRNKV…KATELVDRHL (244 aa)) constitute a Lon N-terminal domain. The segment at 67 to 101 (SLLSPGVGSDSGEGGSKAPGGSAGESTKQDTKNGK) is disordered. Gly residues predominate over residues 75–89 (SDSGEGGSKAPGGSA). Residue 408-415 (GPPGVGKT) coordinates ATP. In terms of domain architecture, Lon proteolytic spans 689–874 (VASPGVSVGL…EEVLDHAFEG (186 aa)). Active-site residues include serine 780 and lysine 823. A Microbody targeting signal motif is present at residues 882–884 (SKL).

It belongs to the peptidase S16 family. Expressed in roots, leaves and panicles.

The protein localises to the peroxisome matrix. It catalyses the reaction Hydrolysis of proteins in presence of ATP.. In terms of biological role, ATP-dependent serine protease that mediates the selective degradation of misfolded and unassembled polypeptides in the peroxisomal matrix. Necessary for type 2 peroxisome targeting signal (PTS2)-containing protein processing and facilitates peroxisome matrix protein import. In Oryza sativa subsp. indica (Rice), this protein is Lon protease homolog 2, peroxisomal (LON1).